A 376-amino-acid chain; its full sequence is MAINVNTNVSAMTAQRYLNHAAEGQQKSMERLSSGYKINSAKDDAAGLQISNRLNAQSRGLDMAVKNANDGISIAQVAEGAMNESTNILQRMRDLSLQSANGSNSKAERVAIQEEVTALNDELNRIAETTSFGGNKLLNGTYGTQSFQIGADSGEAVMLSMGSLRSDTSAMGGKSYSAEEGKDASWTVGDKTELKMSYTNKQGEEKELTIKAKQGDDIEQLATYINGQSEDVKASVGEDGKLQVFASTQKVNGEVEFSGNLAGEIGFGDAKDVTVKDIDVTTVAGSQEAVAVIDGALKSVDSQRASLGAFQNRFNHAISNLDNINENVNASNSRIKDTDYAKETTAMTKSQILQQASTSILAQAKQSPSAALSLLG.

Coiled coils occupy residues 103-128 (SNSK…RIAE) and 310-338 (FQNR…IKDT).

Belongs to the bacterial flagellin family. As to quaternary structure, heteromer of multiple flagellin subunits including FlaA, FlaB/D, FlaC, FlaE and FlaF.

It is found in the secreted. The protein localises to the bacterial flagellum. Flagellin is the subunit protein which polymerizes to form the filaments of bacterial flagella. FlaA is not essential for polar flagellar synthesis and swimming motility. Homomer of FlaA is able to form a functional filament. This is Polar flagellin A (flaA) from Vibrio parahaemolyticus serotype O3:K6 (strain RIMD 2210633).